We begin with the raw amino-acid sequence, 510 residues long: Protein fork head (510 aa).

2 disordered regions span residues 1–62 (MQKL…SPLA) and 175–205 (AMPP…YRRS). Positions 20 to 39 (SGGGGPPSGGGGGGGGGGGG) are enriched in gly residues. The span at 47–60 (NNPNPTSNGGSMSP) shows a compositional bias: low complexity. A phosphoserine mark is found at Ser187 and Ser190. The fork-head DNA-binding region spans 209–300 (AKPPYSYISL…GNMFENGCYL (92 aa)). The tract at residues 309–359 (EKKEAIRQLHKSPSHSSLEATSPGKKDHEDSHHMHHHHHSRLDHHQHHKEA) is disordered. 3 positions are modified to phosphoserine: Ser320, Ser322, and Ser330. A compositionally biased stretch (basic residues) spans 341 to 356 (HMHHHHHSRLDHHQHH).

The protein localises to the nucleus. Functionally, fkh promotes terminal as opposed to segmental development. In the absence of fkh, this developmental switch does not occur. The nuclear localization of the fkh protein suggest that fkh regulates the transcription of other, subordinate, genes. The protein is Protein fork head (fkh) of Drosophila melanogaster (Fruit fly).